Consider the following 158-residue polypeptide: Protein OPG060 (158 aa).

It belongs to the orthopoxvirus OPG058 family.

In Cynomys gunnisoni (Gunnison's prairie dog), this protein is Protein OPG060 (OPG060).